Reading from the N-terminus, the 302-residue chain is Phosphoribosylaminoimidazole-succinocarboxamide synthase (302 aa).

The protein belongs to the SAICAR synthetase family.

It catalyses the reaction 5-amino-1-(5-phospho-D-ribosyl)imidazole-4-carboxylate + L-aspartate + ATP = (2S)-2-[5-amino-1-(5-phospho-beta-D-ribosyl)imidazole-4-carboxamido]succinate + ADP + phosphate + 2 H(+). Its pathway is purine metabolism; IMP biosynthesis via de novo pathway; 5-amino-1-(5-phospho-D-ribosyl)imidazole-4-carboxamide from 5-amino-1-(5-phospho-D-ribosyl)imidazole-4-carboxylate: step 1/2. The protein is Phosphoribosylaminoimidazole-succinocarboxamide synthase of Cupriavidus taiwanensis (strain DSM 17343 / BCRC 17206 / CCUG 44338 / CIP 107171 / LMG 19424 / R1) (Ralstonia taiwanensis (strain LMG 19424)).